The chain runs to 159 residues: FCS-Like Zinc finger 2 (159 aa).

The FLZ-type zinc finger occupies 75-119 (HFLDSCFLCKKRLGDNRDIFMYRGDTPFCSEECREEQIERDEAKE). Positions 113–122 (ERDEAKEKKQ) are enriched in basic and acidic residues. A disordered region spans residues 113–159 (ERDEAKEKKQSLSTSVKAMRRNEKRSSSSSPTRSRNYAFRTGTVAAA).

The protein belongs to the FLZ family. As to quaternary structure, interacts with KIN10 and KIN11 via its FLZ-type zinc finger domain. Interacts with KINB1, KINB2, KINB3 and SNF4 via its N-terminal part. Forms heterodimer with FLZ7, FLZ10, FLZ11, FLZ12, FLZ15, FLZ17 and FLZ18 in vitro.

In terms of biological role, may act as an adapter to facilitate the interaction of SnRK1 complex with effector proteins, conferring tissue- and stimulus-type specific differences in the SnRK1 regulation pathway. The protein is FCS-Like Zinc finger 2 of Arabidopsis thaliana (Mouse-ear cress).